The primary structure comprises 215 residues: Glutathione S-transferase D4 (215 aa).

The GST N-terminal domain occupies 1–80 (MDFYYSPRSS…YLVEKYGKDD (80 aa)). Glutathione-binding positions include Ser9, 50-52 (HTI), and 64-66 (ESR). In terms of domain architecture, GST C-terminal spans 86 to 207 (DPQKRALINQ…KGLLQMKTMY (122 aa)).

The protein belongs to the GST superfamily. Delta family. Homodimer.

The enzyme catalyses RX + glutathione = an S-substituted glutathione + a halide anion + H(+). In terms of biological role, conjugation of reduced glutathione to a wide number of exogenous and endogenous hydrophobic electrophiles. May be involved in detoxification. The sequence is that of Glutathione S-transferase D4 from Drosophila melanogaster (Fruit fly).